Reading from the N-terminus, the 136-residue chain is Cytidine deaminase (136 aa).

The CMP/dCMP-type deaminase domain maps to 1-128; the sequence is MDVEKLIAES…KLLPGAFSKE (128 aa). 42-44 is a substrate binding site; it reads NIE. Cys53 lines the Zn(2+) pocket. Glu55 serves as the catalytic Proton donor. The Zn(2+) site is built by Cys86 and Cys89.

This sequence belongs to the cytidine and deoxycytidylate deaminase family. Zn(2+) is required as a cofactor.

It carries out the reaction cytidine + H2O + H(+) = uridine + NH4(+). It catalyses the reaction 2'-deoxycytidine + H2O + H(+) = 2'-deoxyuridine + NH4(+). Its function is as follows. This enzyme scavenges exogenous and endogenous cytidine and 2'-deoxycytidine for UMP synthesis. The protein is Cytidine deaminase (cdd) of Sporosarcina psychrophila (Bacillus psychrophilus).